The sequence spans 108 residues: Monothiol bacilliredoxin BrxC (108 aa).

Cys31 carries the post-translational modification S-bacillithiol cysteine disulfide.

Interacts with AbrB, BdhA, Bdr, BrxB, FolD, GapA, GapB, GatA, PfkA, PyrAA, PyrAB, PyrE, PyrG, PyrH, RpsB, RpsK, RpsL, SalA, SucC, Tuf and YtsJ. Cys can react with bacillithiol (BSH) to form mixed disulfides. S-bacillithiolation protects Cys residues against overoxidation by acting as a redox switch in response to oxidative stress.

In terms of biological role, S-bacillithiolation is the formation of mixed disulfide bonds between protein thiols and the general thiol reductant bacillithiol (BSH) under oxidative stress. BSH is an equivalent of glutathione (GSH) in Firmicutes. This protein is a monothiol bacilliredoxin, which debacillithiolates (removes BSH) the S-bacillithiolated glyceraldehyde-3-phosphate dehydrogenases (GAPDHs) GapA and GapB in vivo and probably a number of other oxidized cytosolic proteins. Debacillithiolates the S-bacillithiolated Bdr (Bdr-SSB) and BrxB (BrxB-SSB) in vitro. Involved in maintaining redox homeostasis in response to disulfide stress conditions. In Bacillus subtilis (strain 168), this protein is Monothiol bacilliredoxin BrxC.